Reading from the N-terminus, the 229-residue chain is uncharacterized protein (229 aa).

This is an uncharacterized protein from Dictyostelium discoideum (Social amoeba).